The chain runs to 178 residues: Large ribosomal subunit protein uL16 (178 aa).

The protein belongs to the universal ribosomal protein uL16 family.

The protein is Large ribosomal subunit protein uL16 of Saccharolobus islandicus (strain Y.N.15.51 / Yellowstone #2) (Sulfolobus islandicus).